The following is a 399-amino-acid chain: 4-hydroxy-3-methylbut-2-enyl diphosphate reductase (399 aa).

Cysteine 66 contributes to the [4Fe-4S] cluster binding site. Histidine 96 is a binding site for (2E)-4-hydroxy-3-methylbut-2-enyl diphosphate. Histidine 96 contacts dimethylallyl diphosphate. Isopentenyl diphosphate is bound at residue histidine 96. Cysteine 157 provides a ligand contact to [4Fe-4S] cluster. A (2E)-4-hydroxy-3-methylbut-2-enyl diphosphate-binding site is contributed by histidine 185. Histidine 185 lines the dimethylallyl diphosphate pocket. Position 185 (histidine 185) interacts with isopentenyl diphosphate. Glutamate 187 functions as the Proton donor in the catalytic mechanism. (2E)-4-hydroxy-3-methylbut-2-enyl diphosphate is bound at residue threonine 250. Cysteine 288 is a binding site for [4Fe-4S] cluster. Residues serine 317, serine 318, asparagine 319, and serine 380 each coordinate (2E)-4-hydroxy-3-methylbut-2-enyl diphosphate. Dimethylallyl diphosphate is bound by residues serine 317, serine 318, asparagine 319, and serine 380. Residues serine 317, serine 318, asparagine 319, and serine 380 each coordinate isopentenyl diphosphate.

It belongs to the IspH family. Requires [4Fe-4S] cluster as cofactor.

The enzyme catalyses isopentenyl diphosphate + 2 oxidized [2Fe-2S]-[ferredoxin] + H2O = (2E)-4-hydroxy-3-methylbut-2-enyl diphosphate + 2 reduced [2Fe-2S]-[ferredoxin] + 2 H(+). It catalyses the reaction dimethylallyl diphosphate + 2 oxidized [2Fe-2S]-[ferredoxin] + H2O = (2E)-4-hydroxy-3-methylbut-2-enyl diphosphate + 2 reduced [2Fe-2S]-[ferredoxin] + 2 H(+). Its pathway is isoprenoid biosynthesis; dimethylallyl diphosphate biosynthesis; dimethylallyl diphosphate from (2E)-4-hydroxy-3-methylbutenyl diphosphate: step 1/1. The protein operates within isoprenoid biosynthesis; isopentenyl diphosphate biosynthesis via DXP pathway; isopentenyl diphosphate from 1-deoxy-D-xylulose 5-phosphate: step 6/6. In terms of biological role, catalyzes the conversion of 1-hydroxy-2-methyl-2-(E)-butenyl 4-diphosphate (HMBPP) into a mixture of isopentenyl diphosphate (IPP) and dimethylallyl diphosphate (DMAPP). Acts in the terminal step of the DOXP/MEP pathway for isoprenoid precursor biosynthesis. This chain is 4-hydroxy-3-methylbut-2-enyl diphosphate reductase, found in Synechococcus sp. (strain CC9605).